A 98-amino-acid polypeptide reads, in one-letter code: UPF0235 protein azo3464 (98 aa).

This sequence belongs to the UPF0235 family.

The protein is UPF0235 protein azo3464 of Azoarcus sp. (strain BH72).